The sequence spans 349 residues: D-alanine--D-alanine ligase (349 aa).

In terms of domain architecture, ATP-grasp spans 132–335 (KHVFEAVGVP…YSDLIEKLVD (204 aa)). 162-217 (VEKLEFPVFVKPANMGSSVGISKVDDLADLQPALSEAYKYDNRVVIEQGVDAREIE) lines the ATP pocket. Residues Asp-289, Glu-302, and Asn-304 each contribute to the Mg(2+) site.

This sequence belongs to the D-alanine--D-alanine ligase family. The cofactor is Mg(2+). Mn(2+) is required as a cofactor.

It is found in the cytoplasm. It catalyses the reaction 2 D-alanine + ATP = D-alanyl-D-alanine + ADP + phosphate + H(+). It participates in cell wall biogenesis; peptidoglycan biosynthesis. Its function is as follows. Cell wall formation. This Lactococcus lactis subsp. lactis (strain IL1403) (Streptococcus lactis) protein is D-alanine--D-alanine ligase.